The chain runs to 373 residues: Chaperone protein DnaJ (373 aa).

Positions 5–70 constitute a J domain; the sequence is DYYEVLGVAK…QKRAAYDRYG (66 aa). A CR-type zinc finger spans residues 133 to 211; that stretch reads GFDTEIRVPS…CDGVGRTRRN (79 aa). Residues cysteine 146, cysteine 149, cysteine 163, cysteine 166, cysteine 185, cysteine 188, cysteine 199, and cysteine 202 each coordinate Zn(2+). 4 CXXCXGXG motif repeats span residues 146-153, 163-170, 185-192, and 199-206; these read CDTCHGSG, CRTCGGSG, CPTCHGTG, and CPSCDGVG.

Belongs to the DnaJ family. As to quaternary structure, homodimer. It depends on Zn(2+) as a cofactor.

Its subcellular location is the cytoplasm. Participates actively in the response to hyperosmotic and heat shock by preventing the aggregation of stress-denatured proteins and by disaggregating proteins, also in an autonomous, DnaK-independent fashion. Unfolded proteins bind initially to DnaJ; upon interaction with the DnaJ-bound protein, DnaK hydrolyzes its bound ATP, resulting in the formation of a stable complex. GrpE releases ADP from DnaK; ATP binding to DnaK triggers the release of the substrate protein, thus completing the reaction cycle. Several rounds of ATP-dependent interactions between DnaJ, DnaK and GrpE are required for fully efficient folding. Also involved, together with DnaK and GrpE, in the DNA replication of plasmids through activation of initiation proteins. The polypeptide is Chaperone protein DnaJ (Bordetella bronchiseptica (strain ATCC BAA-588 / NCTC 13252 / RB50) (Alcaligenes bronchisepticus)).